Reading from the N-terminus, the 1000-residue chain is MPGKLKVKIVAGRHLPVMDRASDLTDAFVEVKFGNTTFKTDVYLKSLNPQWNSEWFKFEVDDEDLQDEPLQITVLDHDTYSANDAIGKVYIDIDPLLYSEAATVISGWFPIYDTIHGIRGEINVVVKVDLFNDLNRFRQSSCGVKFFCTTSIPKCYRAVIIHGFVEELVVNEDPEYQWIDRIRTPRASNEARQRLISLMSGELQRKIGLKVLEMRGNAVVGYLQCFDLEGESGLVVRAIGTACTLDKLSSPAAFLPACNSPSKEMKEIPFNEDPNPNTHSSGPSTPLKNQTYSFSPSKSYSRQSSSSDTDLSLTPKTGMGSGSAGKEGGPFKALLRQQTQSALEQREFPFFTLTAFPPGFLVHVGGVVSARSVKLLDRIHNPDEPETRDAWWAEIRQEIKSHAKALGCHAVVGYSESTSICEEVCILSASGTAAVLNPRFLQDGTVEGCLEQRLEENLPTRCGFCHIPYDELNMPFPAHLTYCYNCRKQKVPDVLFTTIDLPTDATVIGKGCLIQARLCRLKKKAQAEANATAISNLLPFMEYEVHTQLMNKLKLKGMNALFGLRIQITVGENMLMGLASATGVYLAALPTPGGIQIAGKTPNDGSYEQHISHMQKKINDTIAKNKELYEINPPEISEEIIGSPIPEPRQRSRLLRSQSESSDEVTELDLSHGKKDAFVLEIDDTDAMEDVHSLLTDVPPPSGFYSCNTEIMPGINNWTSEIQMFTSVRVIRLSSLNLTNQALNKNFNDLCENLLKSLYFKLRSMIPCCLCHVNFTVSLPEDELIQVTVTAVAITFDKNQALQTTKTPVEKSLQRASTDNEELLQFPLELCSDSLPSHPFPPAKAMTVEKASPVGDGNFRNRSAPPCANSTVGVVKMTPLSFIPGAKITKYLGIINMFFIRETTSLREEGGVSGFLHAFIAEVFAMVRAHVAALGGNAVVSYIMKQCVFMENPNKNQAQCLINVSGDAVVFVRESDLEVVSSQQPTTNCQSSCTEGEVTT.

One can recognise a C2 domain in the interval M1–F109. 6 residues coordinate Ca(2+): D19, D26, D76, D78, S81, and D84. S197 bears the Phosphoserine; by PKB/AKT2 mark. Phosphoserine occurs at positions 200 and 260. The interval M265–P330 is disordered. The segment covering P274–N289 has biased composition (polar residues). Residues Q290–G318 are compositionally biased toward low complexity. Residues S293, S295, S304, S305, and S306 each carry the phosphoserine modification. Position 317 is a phosphothreonine (T317). Residues M319–G328 show a composition bias toward gly residues. S323 carries the phosphoserine modification. T601 is subject to Phosphothreonine. The tract at residues E639–D669 is disordered. Phosphoserine occurs at positions 643, 657, 659, 661, and 662. T666 is modified (phosphothreonine). At S671 the chain carries Phosphoserine. T807 carries the phosphothreonine modification. Residues S817 and S852 each carry the phosphoserine modification.

Ca(2+) serves as cofactor. In terms of processing, phosphorylated on Ser-197 by active myristoylated kinase AKT2; insulin-stimulated phosphorylation by AKT2 regulates SLC2A4/GLUT4 translocation into the plasma membrane.

Its subcellular location is the cytoplasmic vesicle membrane. It is found in the cytoplasm. The protein localises to the cell cortex. The protein resides in the cell membrane. It localises to the cell projection. Its subcellular location is the ruffle. Its function is as follows. Required for insulin-stimulated glucose transport and glucose transporter SLC2A4/GLUT4 translocation from intracellular glucose storage vesicle (GSV) to the plasma membrane (PM) in adipocytes. Binds phospholipid membranes in a calcium-dependent manner and is necessary for the optimal membrane fusion between SLC2A4/GLUT4 GSV and the PM. This Homo sapiens (Human) protein is C2 domain-containing protein 5 (C2CD5).